A 339-amino-acid polypeptide reads, in one-letter code: Deoxyguanosinetriphosphate triphosphohydrolase-like protein (339 aa).

The 112-residue stretch at R75–I186 folds into the HD domain.

The protein belongs to the dGTPase family. Type 2 subfamily.

This chain is Deoxyguanosinetriphosphate triphosphohydrolase-like protein, found in Caldanaerobacter subterraneus subsp. tengcongensis (strain DSM 15242 / JCM 11007 / NBRC 100824 / MB4) (Thermoanaerobacter tengcongensis).